The primary structure comprises 93 residues: Ubiquinol-cytochrome-c reductase complex assembly factor 3 (93 aa).

Residues 1–7 (MDSLRKM) lie on the Mitochondrial matrix side of the membrane. Residues 8-28 (LISVAMLGAGAGVGYALLVIV) form a helical membrane-spanning segment. A mediates lipid-binding region spans residues 23–80 (ALLVIVTPGERRKQEMLKEMPLQDPRSREEAARTQQLLLATLQEAATTQENVAWRKNW). The Mitochondrial intermembrane segment spans residues 29–93 (TPGERRKQEM…GEGGAGGRSP (65 aa)).

The protein belongs to the UQCC3 family. Associates with the ubiquinol-cytochrome c reductase complex (mitochondrial respiratory chain complex III or cytochrome b-c1 complex). Interacts with UQCC1. Forms a complex, named COMC, composed of UQCC1, UQCC2; UQCC3 and UQCC4; mediates MT-CYB hemylation and association with the first nuclear-encoded complex III subunit UQCRQ. Post-translationally, probably cleaved by OMA1 under mitochondrial stress conditions.

Its subcellular location is the mitochondrion inner membrane. Required for the assembly of the ubiquinol-cytochrome c reductase complex (mitochondrial respiratory chain complex III or cytochrome b-c1 complex), mediating cytochrome b recruitment and probably stabilization within the complex. Thereby, plays an important role in ATP production by mitochondria. Cardiolipin-binding protein, it may also control the cardiolipin composition of mitochondria membranes and their morphology. This is Ubiquinol-cytochrome-c reductase complex assembly factor 3 from Homo sapiens (Human).